Consider the following 256-residue polypeptide: Imidazole glycerol phosphate synthase subunit HisF (256 aa).

Active-site residues include Asp11 and Asp130.

It belongs to the HisA/HisF family. In terms of assembly, heterodimer of HisH and HisF.

The protein localises to the cytoplasm. The enzyme catalyses 5-[(5-phospho-1-deoxy-D-ribulos-1-ylimino)methylamino]-1-(5-phospho-beta-D-ribosyl)imidazole-4-carboxamide + L-glutamine = D-erythro-1-(imidazol-4-yl)glycerol 3-phosphate + 5-amino-1-(5-phospho-beta-D-ribosyl)imidazole-4-carboxamide + L-glutamate + H(+). It participates in amino-acid biosynthesis; L-histidine biosynthesis; L-histidine from 5-phospho-alpha-D-ribose 1-diphosphate: step 5/9. Its function is as follows. IGPS catalyzes the conversion of PRFAR and glutamine to IGP, AICAR and glutamate. The HisF subunit catalyzes the cyclization activity that produces IGP and AICAR from PRFAR using the ammonia provided by the HisH subunit. In Prochlorococcus marinus (strain NATL1A), this protein is Imidazole glycerol phosphate synthase subunit HisF.